The primary structure comprises 154 residues: MFHVSFRYIFGIPPLILVLLPVTSSECHIKDKEGKAYESVLMISIDELDKMTGTDSNCPNNEPNFFRKHVCDDTKEAAFLNRAARKLKQFLKMNISEEFNVHLLTVSQGTQTLVNCTSKEEKNVKEQKKNDACFLKRLLREIKTCWNKILKGSI.

Positions 1 to 25 (MFHVSFRYIFGIPPLILVLLPVTSS) are cleaved as a signal peptide. Cystine bridges form between Cys-27-Cys-145, Cys-58-Cys-133, and Cys-71-Cys-116. Residues Asn-94 and Asn-115 are each glycosylated (N-linked (GlcNAc...) asparagine).

It belongs to the IL-7/IL-9 family. Interacts with IL7R and CSF2RG. Three disulfide bonds are present.

Its subcellular location is the secreted. Its function is as follows. Hematopoietic cytokine that plays an essential role in the development, expansion, and survival of naive and memory T-cells and B-cells thereby regulating the number of mature lymphocytes and maintaining lymphoid homeostasis. Mechanistically, exerts its biological effects through a receptor composed of IL7RA subunit and the cytokine receptor common subunit gamma/CSF2RG. Binding to the receptor leads to activation of various kinases including JAK1 or JAK3 depending on the cell type and subsequently propagation of signals through activation of several downstream signaling pathways including the PI3K/Akt/mTOR or the JAK-STAT5. The sequence is that of Interleukin-7 (Il7) from Mus musculus (Mouse).